A 376-amino-acid polypeptide reads, in one-letter code: Hydroxylysine kinase (376 aa).

The Proton acceptor role is filled by aspartate 229.

The protein belongs to the aminoglycoside phosphotransferase family.

Its subcellular location is the cytoplasm. The catalysed reaction is (5R)-5-hydroxy-L-lysine + GTP = (5R)-5-phosphooxy-L-lysine + GDP + H(+). Catalyzes the GTP-dependent phosphorylation of 5-hydroxy-L-lysine. This is Hydroxylysine kinase (HYKK) from Bos taurus (Bovine).